Here is a 496-residue protein sequence, read N- to C-terminus: UDP-N-acetylmuramate--L-alanine ligase (496 aa).

122 to 128 contributes to the ATP binding site; it reads GTHGKTT.

It belongs to the MurCDEF family.

The protein localises to the cytoplasm. It catalyses the reaction UDP-N-acetyl-alpha-D-muramate + L-alanine + ATP = UDP-N-acetyl-alpha-D-muramoyl-L-alanine + ADP + phosphate + H(+). It participates in cell wall biogenesis; peptidoglycan biosynthesis. Its function is as follows. Cell wall formation. The sequence is that of UDP-N-acetylmuramate--L-alanine ligase from Mycobacterium avium (strain 104).